The sequence spans 456 residues: Membrane-bound lytic murein transglycosylase F (456 aa).

Positions 1–22 (MKTWPSRAVSLLLLALALPVGC) are cleaved as a signal peptide. Residues 23 to 267 (SEPPPPVRDP…ALDETWFGRF (245 aa)) form a non-LT domain region. The LT domain stretch occupies residues 268–456 (GDYDYVDVAR…YRALLAAQDL (189 aa)). Glu314 is an active-site residue.

This sequence in the N-terminal section; belongs to the bacterial solute-binding protein 3 family. In the C-terminal section; belongs to the transglycosylase Slt family.

It is found in the cell outer membrane. It catalyses the reaction Exolytic cleavage of the (1-&gt;4)-beta-glycosidic linkage between N-acetylmuramic acid (MurNAc) and N-acetylglucosamine (GlcNAc) residues in peptidoglycan, from either the reducing or the non-reducing ends of the peptidoglycan chains, with concomitant formation of a 1,6-anhydrobond in the MurNAc residue.. Functionally, murein-degrading enzyme that degrades murein glycan strands and insoluble, high-molecular weight murein sacculi, with the concomitant formation of a 1,6-anhydromuramoyl product. Lytic transglycosylases (LTs) play an integral role in the metabolism of the peptidoglycan (PG) sacculus. Their lytic action creates space within the PG sacculus to allow for its expansion as well as for the insertion of various structures such as secretion systems and flagella. This Maricaulis maris (strain MCS10) (Caulobacter maris) protein is Membrane-bound lytic murein transglycosylase F.